The sequence spans 146 residues: NADH-quinone oxidoreductase subunit A (146 aa).

The next 3 helical transmembrane spans lie at 4-24 (IYHW…VFML), 63-83 (LIAM…AWAI), and 91-111 (IGFS…IYLI).

Belongs to the complex I subunit 3 family. In terms of assembly, NDH-1 is composed of 13 different subunits. Subunits NuoA, H, J, K, L, M, N constitute the membrane sector of the complex.

The protein localises to the cell inner membrane. It catalyses the reaction a quinone + NADH + 5 H(+)(in) = a quinol + NAD(+) + 4 H(+)(out). Functionally, NDH-1 shuttles electrons from NADH, via FMN and iron-sulfur (Fe-S) centers, to quinones in the respiratory chain. The immediate electron acceptor for the enzyme in this species is believed to be ubiquinone. Couples the redox reaction to proton translocation (for every two electrons transferred, four hydrogen ions are translocated across the cytoplasmic membrane), and thus conserves the redox energy in a proton gradient. The sequence is that of NADH-quinone oxidoreductase subunit A from Blochmanniella pennsylvanica (strain BPEN).